The chain runs to 298 residues: NFU1 iron-sulfur cluster scaffold homolog, mitochondrial (298 aa).

The tract at residues 194-262 (IKELLDTRIR…IPEVESVEQV (69 aa)) is nifU. [4Fe-4S] cluster contacts are provided by C231 and C234.

It belongs to the NifU family.

The protein localises to the mitochondrion. Functionally, molecular scaffold for [Fe-S] cluster assembly of mitochondrial iron-sulfur proteins. The protein is NFU1 iron-sulfur cluster scaffold homolog, mitochondrial of Drosophila grimshawi (Hawaiian fruit fly).